Consider the following 779-residue polypeptide: Anion/proton exchange transporter GEF1 (779 aa).

The Cytoplasmic portion of the chain corresponds to 1-75 (MPTTYVPINQ…REVIWDRAKT (75 aa)). A helical membrane pass occupies residues 76-96 (FITLSSTAIVIGCIAGFLQVF). At 97–154 (TETLVNWKTGHCQRNWLLNKSFCCNGVVNEVTSTSNLLLKRQEFECEAQGLWIAWKGH) the chain is on the lumenal side. Residues 155 to 175 (VSPFIIFMLLSVLFALISTLL) form a helical membrane-spanning segment. The Cytoplasmic segment spans residues 176-177 (VK). A helical membrane pass occupies residues 178-198 (YVAPMATGSGISEIKVWVSGF). Residues 199–203 (EYNKE) lie on the Lumenal side of the membrane. Residues 204 to 224 (FLGFLTLVIKSVALPLAISSG) traverse the membrane as a helical segment. Residues 225 to 264 (LSVGKEGPSVHYATCCGYLLTKWLLRDTLTYSSQYEYITA) are Cytoplasmic-facing. The helical transmembrane segment at 265–285 (ASGAGVAVAFGAPIGGVLFGL) threads the bilayer. The Lumenal portion of the chain corresponds to 286–296 (EEIASANRFNS). The helical transmembrane segment at 297-319 (STLWKSYYVALVAITTLKYIDPF) threads the bilayer. The Cytoplasmic segment spans residues 320–336 (RNGRVILFNVTYDRDWK). Residues 337–357 (VQEIPIFIALGIFGGLYGKYI) form a helical membrane-spanning segment. Residues 358–369 (SKWNINFIHFRK) lie on the Lumenal side of the membrane. The helical transmembrane segment at 370-390 (MYLSSWPVQEVLFLATLTALI) threads the bilayer. The Cytoplasmic segment spans residues 391 to 436 (SYFNEFLKLDMTESMGILFHECVKNDNTSTFSHRLCQLDENTHAFE). The helical transmembrane segment at 437 to 457 (FLKIFTSLCFATVIRALLVVV) threads the bilayer. Residues 458 to 465 (SYGARVPA) lie on the Lumenal side of the membrane. Residues 466 to 486 (GIFVPSMAVGATFGRAVSLLV) traverse the membrane as a helical segment. At 487–500 (ERFISGPSVITPGA) the chain is on the cytoplasmic side. A helical membrane pass occupies residues 501-523 (YAFLGAAATLSGITNLTLTVVVI). Over 524–529 (MFELTG) the chain is Lumenal. Residues 530–552 (AFMYIIPLMIVVAITRIILSTSG) form a helical membrane-spanning segment. Residues 553-779 (ISGGIADQMI…FTTNRNGNVI (227 aa)) lie on the Cytoplasmic side of the membrane. CBS domains are found at residues 591 to 659 (MSSK…VNST) and 688 to 744 (MNES…YREV).

This sequence belongs to the chloride channel (TC 2.A.49) family. Homodimer. Interacts with GET3. Proteolytically processed in the secretory pathway by protease KEX2 within the first extracellular loop. However, both the N- and C-terminal products of the cleavage reaction are required for assembly of a functional channel.

The protein resides in the golgi apparatus membrane. It localises to the endosome membrane. Its subcellular location is the prevacuolar compartment membrane. Functionally, anion/proton exchange transporter involved in iron and copper cation homeostasis. Involved in intracellular iron metabolism during growth on fermentable and non fermentable carbon sources. Required for proper copper-loading and maturation of multicopper oxidase FET3. Important for adjusting intracellular compartment pH to more alkaline pH under iron limitation. May also transport chloride ions through the plasma membrane. In Saccharomyces cerevisiae (strain ATCC 204508 / S288c) (Baker's yeast), this protein is Anion/proton exchange transporter GEF1 (GEF1).